The sequence spans 100 residues: Vesicle-associated membrane protein 8 (100 aa).

Met-1 is modified (N-acetylmethionine). Residues 1–75 lie on the Cytoplasmic side of the membrane; the sequence is MEEASEGGGN…ARKFWWKNVK (75 aa). A phosphoserine mark is found at Ser-5 and Ser-18. One can recognise a v-SNARE coiled-coil homology domain in the interval 12–72; it reads RVRNLQSEVE…QKVARKFWWK (61 aa). A phosphothreonine mark is found at Thr-28, Thr-48, and Thr-54. Ser-55 carries the phosphoserine modification. Residues Lys-64 and Lys-68 are each lipidated ((Microbial infection) N6-stearoyl lysine). A helical; Anchor for type IV membrane protein transmembrane segment spans residues 76–96; sequence MIVLICVIVFIIILFIVLFAT. The Vesicular segment spans residues 97-100; it reads GAFS.

This sequence belongs to the synaptobrevin family. As to quaternary structure, forms a SNARE complex composed of VAMP8, SNAP29 and STX17 involved in fusion of autophagosome with lysosome. Found in a number of SNARE complexes with NAPA, SNAP23, SNAP25, STX1A, STX4, STX7, STX8 and VTI1B. Interacts with PICALM. SNARE complex formation and binding by PICALM are mutually exclusive processes for VAMP8. Interacts with SBF2/MTMR13. Interacts with RAB21 (in GTP-bound form) in response to starvation; the interaction probably regulates VAMP8 endolysosomal trafficking. Interacts with STX17; this interaction is increased in the absence of TMEM39A. Interacts with TRIM6. In terms of assembly, (Microbial infection) The interaction with STX17 is decreased in presence of SARS coronavirus-2/SARS-CoV-2 ORF3A protein. Post-translationally, (Microbial infection) Stearoylated By S.flexneri N-epsilon-fatty acyltransferase IcsB, thereby disrupting the host actin cytoskeleton. In terms of tissue distribution, platelets.

It is found in the lysosome membrane. Its subcellular location is the early endosome membrane. It localises to the late endosome membrane. The protein localises to the cell membrane. The protein resides in the zymogen granule membrane. In terms of biological role, SNAREs, soluble N-ethylmaleimide-sensitive factor-attachment protein receptors, are essential proteins for fusion of cellular membranes. SNAREs localized on opposing membranes assemble to form a trans-SNARE complex, an extended, parallel four alpha-helical bundle that drives membrane fusion. VAMP8 is a SNARE involved in autophagy through the direct control of autophagosome membrane fusion with the lysososome membrane via its interaction with the STX17-SNAP29 binary t-SNARE complex. Also required for dense-granule secretion in platelets. Also plays a role in regulated enzyme secretion in pancreatic acinar cells. Involved in the abscission of the midbody during cell division, which leads to completely separate daughter cells. Involved in the homotypic fusion of early and late endosomes. Also participates in the activation of type I interferon antiviral response through a TRIM6-dependent mechanism. In Homo sapiens (Human), this protein is Vesicle-associated membrane protein 8.